A 577-amino-acid chain; its full sequence is Scoloptoxin SSD14 (577 aa).

Positions 1–25 are cleaved as a signal peptide; sequence MGTSYRKLGYVLFLMLGMIVEEGIA.

As to quaternary structure, heterodimer composed of subunits alpha and beta; probably disulfide-linked. Expressed by the venom gland.

It localises to the secreted. Functionally, dose-dependently induces human platelet aggregation on both plasma rich platelet and washed platelet (max. response at 3.2 ug/mL) and causes hemolysis against mouse and rabbit erythrocytes (35 and 65% respectively at 5 ug/mL). Does not show hemolytic activity against human erythrocytes (even at 100 ug/mL). This chain is Scoloptoxin SSD14, found in Scolopendra dehaani (Thai centipede).